The primary structure comprises 238 residues: uncharacterized protein (238 aa).

3 consecutive transmembrane segments (helical) span residues 19–39 (IVIE…FQII), 79–99 (IILF…AEFI), and 141–161 (YVEI…LIKC).

It is found in the cell membrane. This is an uncharacterized protein from Methanocaldococcus jannaschii (strain ATCC 43067 / DSM 2661 / JAL-1 / JCM 10045 / NBRC 100440) (Methanococcus jannaschii).